The sequence spans 1018 residues: Thrombospondin type-1 domain-containing protein 4 (1018 aa).

The N-terminal stretch at 1–26 is a signal peptide; it reads MVSYLTSCLSALSTLLLLLGSQLVCP. 3 disordered regions span residues 34-56, 116-240, and 534-623; these read KVPQ…SPGV, HRSQ…PSEA, and SPQV…NWKQ. Residues 54–307 form the TSP type-1 1 domain; sequence PGVWGSWGPW…YKLCNTNACP (254 aa). A compositionally biased stretch (basic residues) spans 187-199; that stretch reads QRLRRQRPSSRHS. The segment covering 216–230 has biased composition (polar residues); it reads HQFSHSQPLYQSDSG. Basic and acidic residues-rich tracts occupy residues 558–573 and 592–603; these read QEDR…KEDS and RHPERFPSHRPD. TSP type-1 domains are found at residues 676-737, 739-792, 793-851, 852-911, and 912-968; these read CPAF…KICS, WQIR…DMGP, CAKS…GPCT, GKVE…HLKP, and CGAK…QDCV. The PLAC domain occupies 971-1008; it reads VDENCKDKYYNCNVVVQARLCVYNYYKTACCASCTRVA.

In terms of assembly, isoform 2 interacts with FBN1. Isoform 2 may interact with TGFB1. Both isoforms are expressed in the embryo from 7 dpc through 17. Isoform 1 is widely expressed in adult tissues. Isoform 2 is detected in brain, spinal cord, eye, kidney, stomach and uterus. Mainly observed in fibrillar extracellular matrices in elastic tissues (at protein level).

The protein resides in the secreted. Its subcellular location is the extracellular space. It localises to the extracellular matrix. Functionally, promotes FBN1 matrix assembly. Attenuates TGFB signaling, possibly by accelerating the sequestration of large latent complexes of TGFB or active TGFB by FBN1 microfibril assembly, thereby negatively regulating the expression of TGFB regulatory targets, such as POSTN. This chain is Thrombospondin type-1 domain-containing protein 4 (Thsd4), found in Mus musculus (Mouse).